The primary structure comprises 392 residues: S-adenosylmethionine decarboxylase proenzyme (392 aa).

Active-site residues include Glu43 and Glu46. Ser100 functions as the Schiff-base intermediate with substrate; via pyruvic acid in the catalytic mechanism. The residue at position 100 (Ser100) is a Pyruvic acid (Ser); by autocatalysis. The Proton donor; for catalytic activity role is filled by Cys114. Residues Ser264 and His277 each act as proton acceptor; for processing activity in the active site.

It belongs to the eukaryotic AdoMetDC family. The cofactor is pyruvate. In terms of processing, is synthesized initially as an inactive proenzyme. Formation of the active enzyme involves a self-maturation process in which the active site pyruvoyl group is generated from an internal serine residue via an autocatalytic post-translational modification. Two non-identical subunits are generated from the proenzyme in this reaction, and the pyruvate is formed at the N-terminus of the alpha chain, which is derived from the carboxyl end of the proenzyme. The post-translation cleavage follows an unusual pathway, termed non-hydrolytic serinolysis, in which the side chain hydroxyl group of the serine supplies its oxygen atom to form the C-terminus of the beta chain, while the remainder of the serine residue undergoes an oxidative deamination to produce ammonia and the pyruvoyl group blocking the N-terminus of the alpha chain.

It carries out the reaction S-adenosyl-L-methionine + H(+) = S-adenosyl 3-(methylsulfanyl)propylamine + CO2. The protein operates within amine and polyamine biosynthesis; S-adenosylmethioninamine biosynthesis; S-adenosylmethioninamine from S-adenosyl-L-methionine: step 1/1. The protein is S-adenosylmethionine decarboxylase proenzyme of Leishmania infantum.